The primary structure comprises 374 residues: F-box/LRR-repeat protein 8 (374 aa).

The 47-residue stretch at 2-48 (AEPGEGLPEEVLALIFRHLSLRDRAAAARVCRAWAAAATCSAVWHDT) folds into the F-box domain.

Directly interacts with SKP1 and CUL1.

In terms of biological role, substrate-recognition component of the SCF (SKP1-CUL1-F-box protein)-type E3 ubiquitin ligase complex. The protein is F-box/LRR-repeat protein 8 (FBXL8) of Homo sapiens (Human).